The following is a 317-amino-acid chain: Phospholipase A1 1 (317 aa).

An N-terminal signal peptide occupies residues R1–G7. A propeptide spanning residues D8–R17 is cleaved from the precursor. An intrachain disulfide couples C21 to C104. A glycan (N-linked (GlcNAc...) asparagine) is linked at N25. Catalysis depends on S154, which acts as the Nucleophile. D182 (charge relay system) is an active-site residue. Residues C193 and C198 are joined by a disulfide bond. N229 is a glycosylation site (N-linked (GlcNAc...) asparagine). Residues C236 and C244 are joined by a disulfide bond. Residue H246 is the Charge relay system of the active site. Disulfide bonds link C261/C285, C262/C310, and C278/C283.

The protein belongs to the AB hydrolase superfamily. Lipase family. Expressed by the venom gland.

It localises to the secreted. The catalysed reaction is a 1,2-diacyl-sn-glycero-3-phosphocholine + H2O = a 2-acyl-sn-glycero-3-phosphocholine + a fatty acid + H(+). Its function is as follows. Catalyzes the hydrolysis of phosphatidylcholine with phospholipase A1 activity. May act as an allergen and induce hemolytic activity. The sequence is that of Phospholipase A1 1 from Dolichovespula maculata (Bald-faced hornet).